Reading from the N-terminus, the 197-residue chain is UPF0251 protein CT1277 (197 aa).

Residues 138–197 (GGGFGGGRRGGGKCRGFRSGLDRGPGHGEGRCQGEGHGNGNGNGNGQGRMRRNQQEGGEV) form a disordered region. Basic and acidic residues predominate over residues 157-171 (GLDRGPGHGEGRCQG). The segment covering 172–184 (EGHGNGNGNGNGQ) has biased composition (gly residues).

Belongs to the UPF0251 family.

The sequence is that of UPF0251 protein CT1277 from Chlorobaculum tepidum (strain ATCC 49652 / DSM 12025 / NBRC 103806 / TLS) (Chlorobium tepidum).